We begin with the raw amino-acid sequence, 90 residues long: U7-theraphotoxin-Hhn1a 5 (90 aa).

Positions 1–19 are cleaved as a signal peptide; that stretch reads MKTAIFTVVLALAVFAVLS. Residues 20-50 constitute a propeptide that is removed on maturation; that stretch reads FGWEANEKALSEESTELIHEKEAASETEARE. Disulfide bonds link cysteine 51–cysteine 65, cysteine 58–cysteine 70, and cysteine 64–cysteine 81.

This sequence belongs to the neurotoxin 10 (Hwtx-1) family. 13 (Hntx-13) subfamily. In terms of tissue distribution, expressed by the venom gland.

The protein localises to the secreted. Ion channel inhibitor. This chain is U7-theraphotoxin-Hhn1a 5, found in Cyriopagopus hainanus (Chinese bird spider).